The following is a 245-amino-acid chain: DNA repair protein RecO (245 aa).

The protein belongs to the RecO family.

Its function is as follows. Involved in DNA repair and RecF pathway recombination. This Porphyromonas gingivalis (strain ATCC BAA-308 / W83) protein is DNA repair protein RecO.